A 449-amino-acid polypeptide reads, in one-letter code: Phosphoglucosamine mutase (449 aa).

S100 serves as the catalytic Phosphoserine intermediate. 4 residues coordinate Mg(2+): S100, D241, D243, and D245. S100 carries the post-translational modification Phosphoserine.

It belongs to the phosphohexose mutase family. Mg(2+) is required as a cofactor. In terms of processing, activated by phosphorylation.

The enzyme catalyses alpha-D-glucosamine 1-phosphate = D-glucosamine 6-phosphate. Its function is as follows. Catalyzes the conversion of glucosamine-6-phosphate to glucosamine-1-phosphate. In Caldicellulosiruptor bescii (strain ATCC BAA-1888 / DSM 6725 / KCTC 15123 / Z-1320) (Anaerocellum thermophilum), this protein is Phosphoglucosamine mutase.